The chain runs to 367 residues: Glutamate 5-kinase (367 aa).

Lysine 17 lines the ATP pocket. Substrate-binding residues include serine 57, aspartate 144, and asparagine 156. ATP-binding positions include 176–177 (SD) and 217–223 (TGGMTSK). The PUA domain maps to 279–357 (AGALTLDEGA…SELPGELRRP (79 aa)).

The protein belongs to the glutamate 5-kinase family.

The protein resides in the cytoplasm. The enzyme catalyses L-glutamate + ATP = L-glutamyl 5-phosphate + ADP. It functions in the pathway amino-acid biosynthesis; L-proline biosynthesis; L-glutamate 5-semialdehyde from L-glutamate: step 1/2. In terms of biological role, catalyzes the transfer of a phosphate group to glutamate to form L-glutamate 5-phosphate. This chain is Glutamate 5-kinase, found in Mycobacterium avium (strain 104).